We begin with the raw amino-acid sequence, 215 residues long: Penicillin-binding protein activator LpoB (215 aa).

The N-terminal stretch at 1–19 (MMKMCRYALITALAIFLAG) is a signal peptide. Cys-20 carries N-palmitoyl cysteine lipidation. Cys-20 is lipidated: S-diacylglycerol cysteine. The disordered stretch occupies residues 28–78 (APVEEAKPQPQQPAQPQPTVPTVPAVPSVPAQPGPIEHQDQQSGQPAPRVR). Residues 37 to 48 (PQQPAQPQPTVP) show a composition bias toward pro residues. Positions 49 to 58 (TVPAVPSVPA) are enriched in low complexity.

It belongs to the LpoB family. In terms of assembly, interacts with PBP1b.

It localises to the cell outer membrane. Its function is as follows. Regulator of peptidoglycan synthesis that is essential for the function of penicillin-binding protein 1B (PBP1b). In Klebsiella pneumoniae subsp. pneumoniae (strain ATCC 700721 / MGH 78578), this protein is Penicillin-binding protein activator LpoB.